Consider the following 702-residue polypeptide: Elongation factor G (702 aa).

The 283-residue stretch at 8 to 290 folds into the tr-type G domain; it reads ERYRNIGISA…AVIEYLPAPT (283 aa). Residues 17 to 24, 88 to 92, and 142 to 145 each bind GTP; these read AHIDAGKT, DTPGH, and NKMD.

It belongs to the TRAFAC class translation factor GTPase superfamily. Classic translation factor GTPase family. EF-G/EF-2 subfamily.

The protein localises to the cytoplasm. Its function is as follows. Catalyzes the GTP-dependent ribosomal translocation step during translation elongation. During this step, the ribosome changes from the pre-translocational (PRE) to the post-translocational (POST) state as the newly formed A-site-bound peptidyl-tRNA and P-site-bound deacylated tRNA move to the P and E sites, respectively. Catalyzes the coordinated movement of the two tRNA molecules, the mRNA and conformational changes in the ribosome. The chain is Elongation factor G from Yersinia pseudotuberculosis serotype O:1b (strain IP 31758).